A 342-amino-acid polypeptide reads, in one-letter code: Immune-associated nucleotide-binding protein 9 (342 aa).

The AIG1-type G domain occupies 22 to 229 (NPKRTLVLVG…YSDELFHELQ (208 aa)). The tract at residues 31–38 (GRTGNGKS) is G1. GTP is bound by residues 31–39 (GRTGNGKSA) and Ser52. The tract at residues 58–62 (GVTST) is G2. Residues 80–83 (DTPG) are G3. Residues 149–152 (TGGD) are G4. Residues 188-190 (NNK) form a G5 region. Residue Asn189 participates in GTP binding. The stretch at 276-342 (ETKLRDTAKR…QKKLGKCINL (67 aa)) forms a coiled coil.

The protein belongs to the TRAFAC class TrmE-Era-EngA-EngB-Septin-like GTPase superfamily. AIG1/Toc34/Toc159-like paraseptin GTPase family. IAN subfamily. Mainly expressed in leaves.

The polypeptide is Immune-associated nucleotide-binding protein 9 (Arabidopsis thaliana (Mouse-ear cress)).